The following is a 353-amino-acid chain: UPF0283 membrane protein YcjF (353 aa).

3 helical membrane passes run 70–90, 100–120, and 213–233; these read MVMG…VQWT, VALG…GSVV, and ESTL…FIAW.

This sequence belongs to the UPF0283 family.

The protein localises to the cell inner membrane. The protein is UPF0283 membrane protein YcjF of Shigella boydii serotype 4 (strain Sb227).